The chain runs to 158 residues: Regulator of sigma D (158 aa).

It belongs to the Rsd/AlgQ family. In terms of assembly, interacts with RpoD.

It localises to the cytoplasm. Functionally, binds RpoD and negatively regulates RpoD-mediated transcription activation by preventing the interaction between the primary sigma factor RpoD with the catalytic core of the RNA polymerase and with promoter DNA. May be involved in replacement of the RNA polymerase sigma subunit from RpoD to RpoS during the transition from exponential growth to the stationary phase. The polypeptide is Regulator of sigma D (Escherichia coli O6:H1 (strain CFT073 / ATCC 700928 / UPEC)).